The chain runs to 532 residues: Light-independent protochlorophyllide reductase subunit B (532 aa).

Position 36 (aspartate 36) interacts with [4Fe-4S] cluster. Residue aspartate 318 is the Proton donor of the active site. A substrate-binding site is contributed by 453–454 (GM).

This sequence belongs to the ChlB/BchB/BchZ family. In terms of assembly, protochlorophyllide reductase is composed of three subunits; ChlL, ChlN and ChlB. Forms a heterotetramer of two ChlB and two ChlN subunits. It depends on [4Fe-4S] cluster as a cofactor.

The protein localises to the plastid. It is found in the chloroplast. It catalyses the reaction chlorophyllide a + oxidized 2[4Fe-4S]-[ferredoxin] + 2 ADP + 2 phosphate = protochlorophyllide a + reduced 2[4Fe-4S]-[ferredoxin] + 2 ATP + 2 H2O. It participates in porphyrin-containing compound metabolism; chlorophyll biosynthesis (light-independent). Its function is as follows. Component of the dark-operative protochlorophyllide reductase (DPOR) that uses Mg-ATP and reduced ferredoxin to reduce ring D of protochlorophyllide (Pchlide) to form chlorophyllide a (Chlide). This reaction is light-independent. The NB-protein (ChlN-ChlB) is the catalytic component of the complex. The sequence is that of Light-independent protochlorophyllide reductase subunit B from Tetradesmus obliquus (Green alga).